The chain runs to 337 residues: MNGLGGLNKSEHGVVIGLVQLQLPVVVTKEDLAKQTEKIVWMVGKARRNLGTMDLVVFPEYSLHGLSMDTNPEIMCRLDGPEVAAFKQACIDNKIWGCFSIMEYNPDGNPYNSGLIIDSNGEIKLYYRKLHPWIPVEPWEPGDLGIPVIEGPRGAKIALIICHDGMFPEMARECAYKGAEIMIRTAGYTAPIRDSWRFTNQANAFQNLMVTANVCMCGSDGSFDSMGEGMIVNFDGSILAHGTTGRADEIITAEVRPDLVREARIGWGVENNIYQLWHRGYVAVKGGAMDCPYTFMHDMVAGTYRLPWEDQVKITDGTSCGFPAPTRVFGKMAKAAE.

Positions 14–257 (VVIGLVQLQL…DEIITAEVRP (244 aa)) constitute a CN hydrolase domain. Residue E60 is the Proton acceptor of the active site. The Proton donor role is filled by K129. The Nucleophile role is filled by C162.

This sequence belongs to the carbon-nitrogen hydrolase superfamily. Aliphatic amidase family.

It carries out the reaction formamide + H2O = formate + NH4(+). In terms of biological role, is an aliphatic amidase with a restricted substrate specificity, as it only hydrolyzes formamide. The chain is Formamidase from Bradyrhizobium sp. (strain ORS 278).